Here is a 320-residue protein sequence, read N- to C-terminus: L-lactate dehydrogenase (320 aa).

NAD(+) contacts are provided by residues V18, D39, R44, Y69, and 83-84 (GA). Substrate-binding residues include Q86 and R92. NAD(+) is bound by residues S105, 122 to 124 (AAN), and S147. Residue 124–127 (NPVD) participates in substrate binding. 152-155 (DSSR) is a binding site for substrate. Residue H179 is the Proton acceptor of the active site. Phosphotyrosine is present on Y223. A substrate-binding site is contributed by T232.

The protein belongs to the LDH/MDH superfamily. LDH family. As to quaternary structure, homotetramer.

The protein localises to the cytoplasm. It carries out the reaction (S)-lactate + NAD(+) = pyruvate + NADH + H(+). It participates in fermentation; pyruvate fermentation to lactate; (S)-lactate from pyruvate: step 1/1. With respect to regulation, the quaternary structure is constitutionally similar to the active conformation of allosteric LDHs, and the regulation is independent of the fructose 1,6-bisphosphate-binding site. In terms of biological role, catalyzes the conversion of lactate to pyruvate. In Lactiplantibacillus pentosus (Lactobacillus pentosus), this protein is L-lactate dehydrogenase.